Reading from the N-terminus, the 345-residue chain is Protein PXR1 (345 aa).

Disordered regions lie at residues 1 to 25 (MGLA…SNNN) and 166 to 317 (VEDE…ASRL). Residues 25–71 (NNQFGHQYLTKMGWTPGKGIGLVPDSITTHLKINIKTDNAGLGAKLQ) enclose the G-patch domain. The segment covering 187-227 (KKEKKEKKEKKEKKEKKEKKEKKEKKEKKEKKEKKEKKEKK) has biased composition (basic residues). A compositionally biased stretch (basic and acidic residues) spans 228 to 237 (EKKEKSDKKE). A compositionally biased stretch (basic residues) spans 238 to 278 (KKEKKDKKEKKEKKEKKEKKEKKEKKEKKEKKEKKEKKEKK). Basic and acidic residues predominate over residues 279 to 288 (EKKDKLDKES). Residues 289–312 (SNAANVESTKSLVSDSSRESTPTP) are compositionally biased toward polar residues.

It belongs to the PINX1 family.

The protein localises to the nucleus. Its subcellular location is the nucleolus. Involved in rRNA-processing at A0, A1 and A2 sites and negatively regulates telomerase. The protein is Protein PXR1 (PXR1) of Lodderomyces elongisporus (strain ATCC 11503 / CBS 2605 / JCM 1781 / NBRC 1676 / NRRL YB-4239) (Yeast).